Reading from the N-terminus, the 574-residue chain is E3 ubiquitin-protein ligase TRIM23 (574 aa).

The segment at 31 to 76 adopts an RING-type; degenerate zinc-finger fold; sequence CGVCEDVFSLQGDKVPRLLLCGHTVCHDCLTRLPLHGRAIRCPFDR. The segment at 122-168 adopts a B box-type; degenerate zinc-finger fold; sequence ESIIRCDEDEAHLASVYCTVCATHLCSECSQVTHSTKTLAKHRRVPL. Residues 352–379 are a coiled coil; it reads RVVLAKQEITRLLETLQKQQQQFTEVAD. Positions 390 to 574 are ARF-like; the sequence is TFTKDNRVHI…LVAAGVLDVA (185 aa). GTP is bound by residues 411–418, 454–458, and 513–516; these read GLDGAGKT, DVGGK, and NKQD.

This sequence in the C-terminal section; belongs to the small GTPase superfamily. Arf family. In terms of assembly, homodimer. Interacts with PSCD1. Interacts with UBE2D2. Interacts with TBK1 (via N-terminal kinase domain) and p62/SQSTM1. As to quaternary structure, (Microbial infection) Interacts with human cytomegalovirus protein UL144; this interaction might cause autoubiquitination of TRAF6, leading to NF-kappa-B activation.

Its subcellular location is the cytoplasm. The protein localises to the endomembrane system. It is found in the golgi apparatus membrane. It localises to the lysosome membrane. It carries out the reaction S-ubiquitinyl-[E2 ubiquitin-conjugating enzyme]-L-cysteine + [acceptor protein]-L-lysine = [E2 ubiquitin-conjugating enzyme]-L-cysteine + N(6)-ubiquitinyl-[acceptor protein]-L-lysine.. It participates in protein modification; protein ubiquitination. Acts as an E3 ubiquitin-protein ligase. Plays an essential role in autophagy activation during viral infection. Mechanistically, activates TANK-binding kinase 1/TBK1 by facilitating its dimerization and ability to phosphorylate the selective autophagy receptor SQSTM1. In order to achieve this function, TRIM23 mediates 'Lys-27'-linked auto-ubiquitination of its ADP-ribosylation factor (ARF) domain to induce its GTPase activity and its recruitment to autophagosomes. In terms of biological role, (Microbial infection) Mediates TRAF6 auto-ubiquitination in the presence of human cytomegalovirus protein UL144, resulting in the virally controlled activation of NF-kappa-B stimulation at early times of HCMV infection. This chain is E3 ubiquitin-protein ligase TRIM23 (TRIM23), found in Homo sapiens (Human).